Here is a 471-residue protein sequence, read N- to C-terminus: MTQFLPPNLLALFAPRDPVPYLPPLDKLPHEKHHNQPYCGIAPYIREFEDPRDAPPPTRAETREERMERKRREKIERRQQDVENELKIWDPHNDQNAQGDAFKTLFVARVNYDTTESKLRREFEVYGPIKRIHIVYNKGSEGSGKPRGYAFIEYEHERDMHSAYKHADGKKIDGRRVLVDVERGRTVKGWRPRRLGGGLGGTRRGGADVNIRHSGRDDTSRYDERDRERERDRRERSREREKEPRERRRSRSRERRRKSRSREKEERKRTREKSKDKDKEKDKDNKDRDRKRRSRSRERKRERDRDREKKEERVEAEVPEADDAPQDDAQIGDLGIDGIELKQEPEEKSRERDRERDRDREKGEKDRDKDRDRDRDRRRSHRDRDREKDRDRDRDRRRDRDRDRERDKDHKRERDRGDRSEKREERVPDNGMVMEQAEETSQDMYLDQESMQSGDGYLSTENGYMMEPPME.

A disordered region spans residues 48–78 (FEDPRDAPPPTRAETREERMERKRREKIERR). Residues 60–78 (AETREERMERKRREKIERR) show a composition bias toward basic and acidic residues. The segment at 92-205 (HNDQNAQGDA…GGGLGGTRRG (114 aa)) is required for interaction with U1 RNA. The RRM domain maps to 103–184 (KTLFVARVNY…RRVLVDVERG (82 aa)). Residues 190–471 (WRPRRLGGGL…NGYMMEPPME (282 aa)) form a disordered region. Gly residues predominate over residues 195–204 (LGGGLGGTRR). The span at 210–246 (NIRHSGRDDTSRYDERDRERERDRRERSREREKEPRE) shows a compositional bias: basic and acidic residues. Residues 247–261 (RRRSRSRERRRKSRS) show a composition bias toward basic residues. The span at 262-288 (REKEERKRTREKSKDKDKEKDKDNKDR) shows a compositional bias: basic and acidic residues. Basic residues predominate over residues 289–298 (DRKRRSRSRE). A compositionally biased stretch (basic and acidic residues) spans 299–316 (RKRERDRDREKKEERVEA). Positions 317 to 326 (EVPEADDAPQ) are enriched in acidic residues. Basic and acidic residues predominate over residues 339–428 (IELKQEPEEK…RSEKREERVP (90 aa)).

In terms of assembly, component of the U1 snRNP. The U1 snRNP is composed of the U1 snRNA and the 7 core Sm proteins snrpb, snrpd1, snrpd2, snrpd3, snrpe, snrpf and snrpg that assemble in a heptameric protein ring on the Sm site of the small nuclear RNA to form the core snRNP, and at least three U1 snRNP-specific proteins snrnp70/U1-70K, snrpa/U1-A and snrpc/U1-C.

It localises to the nucleus speckle. It is found in the nucleus. The protein resides in the nucleoplasm. Functionally, component of the spliceosomal U1 snRNP, which is essential for recognition of the pre-mRNA 5' splice-site and the subsequent assembly of the spliceosome. snrnp70 binds to the loop I region of U1-snRNA. This chain is U1 small nuclear ribonucleoprotein 70 kDa (snrnp70), found in Xenopus laevis (African clawed frog).